The sequence spans 108 residues: Small ribosomal subunit protein bS16 (108 aa).

Residues 82–108 (ESKFSKNTQTENKKPVSKKTTKKSKDN) form a disordered region. Basic residues predominate over residues 96–108 (PVSKKTTKKSKDN).

It belongs to the bacterial ribosomal protein bS16 family.

This Mycoplasma capricolum subsp. capricolum (strain California kid / ATCC 27343 / NCTC 10154) protein is Small ribosomal subunit protein bS16.